Here is a 538-residue protein sequence, read N- to C-terminus: Atos homolog protein B (538 aa).

3 disordered regions span residues 1-99 (MRHV…PSTV), 165-185 (QGGQ…QLHT), and 199-270 (KSPV…GTLG). Over residues 227 to 238 (HTPPGPGPPGPC) the composition is skewed to pro residues. 2 positions are modified to phosphoserine: S254 and S255. The tract at residues 348 to 430 (LLGNFEESLL…VPKVGTIQVT (83 aa)) is required for macropage invasion. Residues 436–444 (QTVVKMFLV) are transactivation domain 1 (TAD1).

This sequence belongs to the ATOS family.

The protein resides in the nucleus. Functionally, transcription regulator that syncronizes transcriptional and translational programs to promote macrophage invasion of tissues. The protein is Atos homolog protein B of Mus musculus (Mouse).